We begin with the raw amino-acid sequence, 648 residues long: Replication restart protein PriA (648 aa).

The 167-residue stretch at 131–297 (TILNESNKPT…KTHKYQLVTL (167 aa)) folds into the Helicase ATP-binding domain. Residue 144-151 (GVTGSGKT) coordinates ATP. Residues 240 to 243 (DEEH) carry the DEAH box motif. C358, C361, C367, C370, C385, C388, C398, and C401 together coordinate Zn(2+). The Helicase C-terminal domain occupies 375–548 (VLHKATKKLE…RFFTNELEIR (174 aa)).

It belongs to the helicase family. PriA subfamily. As to quaternary structure, component of the replication restart primosome. Requires Zn(2+) as cofactor.

It carries out the reaction Couples ATP hydrolysis with the unwinding of duplex DNA by translocating in the 3'-5' direction.. The enzyme catalyses ATP + H2O = ADP + phosphate + H(+). Functionally, initiates the restart of stalled replication forks, which reloads the replicative helicase on sites other than the origin of replication. Recognizes and binds to abandoned replication forks and remodels them to uncover a helicase loading site. Promotes assembly of the primosome at these replication forks. The polypeptide is Replication restart protein PriA (Rickettsia prowazekii (strain Madrid E)).